Reading from the N-terminus, the 286-residue chain is Diaminopimelate epimerase (286 aa).

2 residues coordinate substrate: N13 and N66. The active-site Proton donor is the C75. Substrate contacts are provided by residues G76–N77, N165, N198, and E216–R217. C225 serves as the catalytic Proton acceptor. G226–T227 serves as a coordination point for substrate.

Belongs to the diaminopimelate epimerase family. In terms of assembly, homodimer.

Its subcellular location is the cytoplasm. The catalysed reaction is (2S,6S)-2,6-diaminopimelate = meso-2,6-diaminopimelate. It participates in amino-acid biosynthesis; L-lysine biosynthesis via DAP pathway; DL-2,6-diaminopimelate from LL-2,6-diaminopimelate: step 1/1. Its function is as follows. Catalyzes the stereoinversion of LL-2,6-diaminopimelate (L,L-DAP) to meso-diaminopimelate (meso-DAP), a precursor of L-lysine and an essential component of the bacterial peptidoglycan. The chain is Diaminopimelate epimerase from Thermosynechococcus vestitus (strain NIES-2133 / IAM M-273 / BP-1).